Here is a 40-residue protein sequence, read N- to C-terminus: Bomanin Short 6 (40 aa).

Residues 1-18 (MKLLSITFLFGLLALASA) form the signal peptide. A propeptide spans 19 to 23 (NPLSP) (removed by a dipeptidylpeptidase). Cys-32 and Cys-35 are disulfide-bonded.

This sequence belongs to the bomanin family.

The protein localises to the secreted. Functionally, secreted immune-induced peptide induced by Toll signaling. Has a role in resistance to bacterial and fungal infections. The strength of antimicrobial activity appears to correlate with the overall level of expression. The protein is Bomanin Short 6 of Drosophila melanogaster (Fruit fly).